A 1118-amino-acid chain; its full sequence is Protein SUPPRESSOR OF NPR1-1 CONSTITUTIVE 4 (1118 aa).

The signal sequence occupies residues 1 to 35 (MNSQQSTRTKQMLQQSSTHLLCGVVLLQLFAAQVD). The Extracellular portion of the chain corresponds to 36 to 751 (AQRSTSPWQT…PLRNFLKVIR (716 aa)). The region spanning 51–353 (PLVIARGGFS…DFPLTASASV (303 aa)) is the GP-PDE 1 domain. Residues N106, N195, N251, N260, N318, N335, N362, N422, N433, N497, N557, N573, and N656 are each glycosylated (N-linked (GlcNAc...) asparagine). The region spanning 369-670 (FLVISKNGAS…EFPYTAARYK (302 aa)) is the GP-PDE 2 domain. The helical transmembrane segment at 752-772 (IVSWSVAGVVLFLVLLTLVFC) threads the bilayer. Topologically, residues 773–1118 (FHRKRETRLR…SEDVSVYTEG (346 aa)) are cytoplasmic. Positions 805-1094 (KSFAEVVGRG…ALEVPPRPVL (290 aa)) constitute a Protein kinase domain. ATP-binding positions include 811 to 819 (VGRGGFGIV) and K833. Residue D928 is the Proton acceptor of the active site.

In the N-terminal section; belongs to the glycerophosphoryl diester phosphodiesterase family. This sequence in the C-terminal section; belongs to the protein kinase superfamily. Ser/Thr protein kinase family. As to expression, expressed in shoots, rosette and cauline leaves, stems, flowers and siliques.

It localises to the cell membrane. It catalyses the reaction a sn-glycero-3-phosphodiester + H2O = an alcohol + sn-glycerol 3-phosphate + H(+). It carries out the reaction L-seryl-[protein] + ATP = O-phospho-L-seryl-[protein] + ADP + H(+). The enzyme catalyses L-threonyl-[protein] + ATP = O-phospho-L-threonyl-[protein] + ADP + H(+). Its function is as follows. Atypical receptor-like kinase involved in disease resistance. This Arabidopsis thaliana (Mouse-ear cress) protein is Protein SUPPRESSOR OF NPR1-1 CONSTITUTIVE 4.